A 317-amino-acid chain; its full sequence is Ferrochelatase (317 aa).

Fe cation-binding residues include His192 and Glu271.

This sequence belongs to the ferrochelatase family.

The protein resides in the cytoplasm. It carries out the reaction heme b + 2 H(+) = protoporphyrin IX + Fe(2+). The protein operates within porphyrin-containing compound metabolism; protoheme biosynthesis; protoheme from protoporphyrin-IX: step 1/1. Catalyzes the ferrous insertion into protoporphyrin IX. This chain is Ferrochelatase, found in Citrifermentans bemidjiense (strain ATCC BAA-1014 / DSM 16622 / JCM 12645 / Bem) (Geobacter bemidjiensis).